We begin with the raw amino-acid sequence, 317 residues long: Transaldolase (317 aa).

Catalysis depends on Lys126, which acts as the Schiff-base intermediate with substrate.

Belongs to the transaldolase family. Type 1 subfamily. In terms of assembly, homodimer.

The protein localises to the cytoplasm. The enzyme catalyses D-sedoheptulose 7-phosphate + D-glyceraldehyde 3-phosphate = D-erythrose 4-phosphate + beta-D-fructose 6-phosphate. It participates in carbohydrate degradation; pentose phosphate pathway; D-glyceraldehyde 3-phosphate and beta-D-fructose 6-phosphate from D-ribose 5-phosphate and D-xylulose 5-phosphate (non-oxidative stage): step 2/3. Transaldolase is important for the balance of metabolites in the pentose-phosphate pathway. This Paraburkholderia phytofirmans (strain DSM 17436 / LMG 22146 / PsJN) (Burkholderia phytofirmans) protein is Transaldolase.